The primary structure comprises 2201 residues: Voltage-dependent T-type calcium channel subunit alpha-1I (2201 aa).

The tract at residues 1 to 45 (MADSNLPPSSAAAPAPEPGITEQPGPRSPPPSPPGLEEPLEGTNP) is disordered. Residues 1 to 76 (MADSNLPPSS…RNWCIKMVCN (76 aa)) lie on the Cytoplasmic side of the membrane. The segment covering 26–36 (PRSPPPSPPGL) has biased composition (pro residues). The stretch at 64–399 (TSPRNWCIKM…LCLVVIATQF (336 aa)) is one I repeat. The helical transmembrane segment at 77–97 (PWFECVSMLVILLNCVTLGMY) threads the bilayer. At 98 to 115 (QPCDDMECLSDRCKILQV) the chain is on the extracellular side. The chain crosses the membrane as a helical span at residues 116-137 (FDDFIFIFFAMEMVLKMVALGI). Over 138 to 146 (FGKKCYLGD) the chain is Cytoplasmic. Residues 147–166 (TWNRLDFFIVMAGMVEYSLD) form a helical membrane-spanning segment. Topologically, residues 167–171 (LQNIN) are extracellular. N-linked (GlcNAc...) asparagine glycosylation occurs at Asn171. The chain crosses the membrane as a helical span at residues 172 to 189 (LSAIRTVRVLRPLKAINR). Residues 190-209 (VPSMRILVNLLLDTLPMLGN) are Cytoplasmic-facing. The chain crosses the membrane as a helical span at residues 210–230 (VLLLCFFVFFIFGIIGVQLWA). At 231–371 (GLLRNRCFLE…YYVMDAHSFY (141 aa)) the chain is on the extracellular side. N-linked (GlcNAc...) asparagine glycans are attached at residues Asn242 and Asn309. The chain crosses the membrane as a helical span at residues 372–396 (NFIYFILLIIVGSFFMINLCLVVIA). Over 397-598 (TQFSETKQRE…EKLRGIVDSK (202 aa)) the chain is Cytoplasmic. Disordered regions lie at residues 463-500 (QAMG…TPHT) and 513-579 (PSSC…AARL). A compositionally biased stretch (low complexity) spans 545 to 554 (SAEAEANGDG). One copy of the II repeat lies at 584–823 (WRETREKLRG…LLVAILVEGF (240 aa)). Residues 599 to 619 (YFNRGIMMAILVNTVSMGIEH) form a helical membrane-spanning segment. The Extracellular portion of the chain corresponds to 620–632 (HEQPEELTNILEI). A helical membrane pass occupies residues 633-654 (CNVVFTSMFALEMILKLAAFGL). Residues 655 to 660 (FDYLRN) lie on the Cytoplasmic side of the membrane. The helical transmembrane segment at 661 to 679 (PYNIFDSIIVIISIWEIVG) threads the bilayer. Residues 680–687 (QADGGLSV) are Extracellular-facing. Residues 688-711 (LRTFRLLRVLKLVRFMPALRRQLV) form a helical membrane-spanning segment. Residues 712–722 (VLMKTMDNVAT) lie on the Cytoplasmic side of the membrane. Residues 723-743 (FCMLLMLFIFIFSILGMHIFG) traverse the membrane as a helical segment. Residues 744–795 (CKFSLRTDTGDTVPDRKNFDSLLWAIVTVFQILTQEDWNVVLYNGMASTTPW) lie on the Extracellular side of the membrane. Residues 796–820 (ASLYFVALMTFGNYVLFNLLVAILV) traverse the membrane as a helical segment. Topologically, residues 821-1125 (EGFQAEGDAN…NKFRILCQTI (305 aa)) are cytoplasmic. Positions 936 to 969 (WGRSGTWASRRSSWNSLKHKPPSAEHESLLSGEG) are disordered. Residues 941–951 (TWASRRSSWNS) show a composition bias toward polar residues. Phosphoserine is present on Ser1017. Residues 1116 to 1393 (NKFRILCQTI…MFVGVVVENF (278 aa)) form an III repeat. A helical membrane pass occupies residues 1126 to 1148 (IAHKLFDYVVLAFIFLNCITIAL). Residues 1149 to 1166 (ERPQIEAGSTERIFLTVS) are Extracellular-facing. The helical transmembrane segment at 1167–1187 (NYIFTAIFVGEMTLKVVSLGL) threads the bilayer. The Cytoplasmic portion of the chain corresponds to 1188-1197 (YFGEQAYLRS). The helical transmembrane segment at 1198–1217 (SWNVLDGFLVFVSIIDIVVS) threads the bilayer. Residues 1218–1231 (VASAGGAKILGVLR) are Extracellular-facing. The helical transmembrane segment at 1232 to 1253 (VLRLLRTLRPLRVISRAPGLKL) threads the bilayer. The Cytoplasmic portion of the chain corresponds to 1254–1263 (VVETLISSLK). A helical transmembrane segment spans residues 1264 to 1287 (PIGNIVLICCAFFIIFGILGVQLF). Topologically, residues 1288–1364 (KGKFYHCLGV…DQQPVTNHNP (77 aa)) are extracellular. Asn1301 and Asn1304 each carry an N-linked (GlcNAc...) asparagine glycan. A helical membrane pass occupies residues 1365 to 1390 (WMLLYFISFLLIVSFFVLNMFVGVVV). Topologically, residues 1391–1445 (ENFHKCRQHQEAEEARRREEKRLRRLEKKRRKAQRLPYYATYCPTRLLIHSMCTS) are cytoplasmic. An IV repeat occupies 1431-1692 (TYCPTRLLIH…VVVAVLMKHL (262 aa)). Residues 1446 to 1466 (HYLDIFITFIICLNVVTMSLE) traverse the membrane as a helical segment. The Extracellular segment spans residues 1467-1480 (HYNQPTSLETALKY). A helical membrane pass occupies residues 1481–1502 (CNYMFTTVFVLEAVLKLVAFGL). Over 1503–1509 (RRFFKDR) the chain is Cytoplasmic. A helical membrane pass occupies residues 1510–1528 (WNQLDLAIVLLSVMGITLE). At 1529–1542 (EIEINAALPINPTI) the chain is on the extracellular side. The helical transmembrane segment at 1543 to 1566 (IRIMRVLRIARVLKLLKMATGMRA) threads the bilayer. At 1567–1580 (LLDTVVQALPQVGN) the chain is on the cytoplasmic side. Residues 1581 to 1601 (LGLLFMLLFFIYAALGVELFG) form a helical membrane-spanning segment. At 1602–1664 (KLVCNDENPC…RSCLSSLQFV (63 aa)) the chain is on the extracellular side. The chain crosses the membrane as a helical span at residues 1665–1692 (SPLYFVSFVLTAQFVLINVVVAVLMKHL). The Cytoplasmic portion of the chain corresponds to 1693–1835 (DDSNKEAQED…EVQLAETEAF (143 aa)). Disordered regions lie at residues 1846-1876 (LLGD…PEPM), 1916-1938 (LKHD…PLLQ), 1992-2045 (SDTS…TRRR), 2057-2105 (RGLR…HSET), and 2126-2201 (LTPA…KRKR). Residues 1992 to 2007 (SDTSLDASPSSSAGSL) are compositionally biased toward low complexity. Composition is skewed to polar residues over residues 2008–2019 (QTTLEDSLTLSD) and 2066–2075 (HSSGGSTSPG). The span at 2077 to 2090 (THHDSMDPSDEEGR) shows a compositional bias: basic and acidic residues.

This sequence belongs to the calcium channel alpha-1 subunit (TC 1.A.1.11) family. CACNA1I subfamily. In terms of assembly, interacts with CATSPER1 and CATSPER2, leading to suppress T-type calcium channel activity. In terms of processing, in response to raising of intracellular calcium, the T-type channels are activated by CaM-kinase II. Brain.

It is found in the membrane. It catalyses the reaction Ca(2+)(in) = Ca(2+)(out). Functionally, voltage-sensitive calcium channels (VSCC) mediate the entry of calcium ions into excitable cells and are also involved in a variety of calcium-dependent processes, including muscle contraction, hormone or neurotransmitter release, gene expression, cell motility, cell division and cell death. This channel gives rise to T-type calcium currents. T-type calcium channels belong to the 'low-voltage activated (LVA)' group and are strongly blocked by nickel and mibefradil. A particularity of this type of channels is an opening at quite negative potentials, and a voltage-dependent inactivation. T-type channels serve pacemaking functions in both central neurons and cardiac nodal cells and support calcium signaling in secretory cells and vascular smooth muscle. They may also be involved in the modulation of firing patterns of neurons which is important for information processing as well as in cell growth processes. Gates in voltage ranges similar to, but higher than alpha 1G or alpha 1H. In terms of biological role, voltage-sensitive calcium channels (VSCC) mediate the entry of calcium ions into excitable cells and are also involved in a variety of calcium-dependent processes, including muscle contraction, hormone or neurotransmitter release, gene expression, cell motility, cell division and cell death. This channel gives rise to T-type calcium currents. This Rattus norvegicus (Rat) protein is Voltage-dependent T-type calcium channel subunit alpha-1I (Cacna1i).